The chain runs to 291 residues: Peptide methionine sulfoxide reductase MsrB/MsrA (291 aa).

The region spanning 1–124 is the MsrB domain; sequence MLANLQHLSD…NSAALRFVAR (124 aa). Residue Cys-113 is the Nucleophile of the active site. Residues 127–284 form a peptide methionine sulfoxide reductase A region; that stretch reads GTALFAAGCF…PGGYCHVSLH (158 aa). Cys-135 is a catalytic residue.

The protein in the N-terminal section; belongs to the MsrB Met sulfoxide reductase family. In the C-terminal section; belongs to the MsrA Met sulfoxide reductase family.

It catalyses the reaction L-methionyl-[protein] + [thioredoxin]-disulfide + H2O = L-methionyl-(R)-S-oxide-[protein] + [thioredoxin]-dithiol. It carries out the reaction L-methionyl-[protein] + [thioredoxin]-disulfide + H2O = L-methionyl-(S)-S-oxide-[protein] + [thioredoxin]-dithiol. The enzyme catalyses [thioredoxin]-disulfide + L-methionine + H2O = L-methionine (S)-S-oxide + [thioredoxin]-dithiol. Its function is as follows. Has an important function as a repair enzyme for proteins that have been inactivated by oxidation. Catalyzes the reversible oxidation-reduction of methionine sulfoxide in proteins to methionine. The chain is Peptide methionine sulfoxide reductase MsrB/MsrA (msrAB) from Treponema pallidum (strain Nichols).